The sequence spans 189 residues: Cell division protein SepF (189 aa).

Polar residues predominate over residues 152–163 (FQEEPSPSSVMN). The interval 152-189 (FQEEPSPSSVMNKDNEGPVSESVMAPEPAWGASVPSAI) is disordered.

The protein belongs to the SepF family. As to quaternary structure, homodimer. Interacts with FtsZ.

Its subcellular location is the cytoplasm. In terms of biological role, cell division protein that is part of the divisome complex and is recruited early to the Z-ring. Probably stimulates Z-ring formation, perhaps through the cross-linking of FtsZ protofilaments. Its function overlaps with FtsA. This is Cell division protein SepF from Prochlorococcus marinus (strain SARG / CCMP1375 / SS120).